The sequence spans 318 residues: Phospho-N-acetylmuramoyl-pentapeptide-transferase (318 aa).

10 helical membrane-spanning segments follow: residues 5-25, 50-70, 71-91, 115-135, 139-159, 173-193, 198-218, 222-242, 248-268, and 298-318; these read LKPLVLAAVVTLILGPPVLAF, PTMGGVLFLIGLTVSTLVLAP, PSPLTLSTLILTWGYALIGLV, VLLGLVAGVAAMLWLGRGSVI, VTGWHWDLGWYYPLLAALLLV, GLAAGITLWVALAYGILALTL, LVTFAMALAGGCLGFLVYNFH, VFMGDTGSLALGAAIGFLAIM, VLPVLGGVYVLETLSVILQVV, and VLFFWALAIIMALAGLYLLTI.

The protein belongs to the glycosyltransferase 4 family. MraY subfamily. It depends on Mg(2+) as a cofactor.

It localises to the cell membrane. It catalyses the reaction UDP-N-acetyl-alpha-D-muramoyl-L-alanyl-gamma-D-glutamyl-meso-2,6-diaminopimeloyl-D-alanyl-D-alanine + di-trans,octa-cis-undecaprenyl phosphate = di-trans,octa-cis-undecaprenyl diphospho-N-acetyl-alpha-D-muramoyl-L-alanyl-D-glutamyl-meso-2,6-diaminopimeloyl-D-alanyl-D-alanine + UMP. It functions in the pathway cell wall biogenesis; peptidoglycan biosynthesis. Its function is as follows. Catalyzes the initial step of the lipid cycle reactions in the biosynthesis of the cell wall peptidoglycan: transfers peptidoglycan precursor phospho-MurNAc-pentapeptide from UDP-MurNAc-pentapeptide onto the lipid carrier undecaprenyl phosphate, yielding undecaprenyl-pyrophosphoryl-MurNAc-pentapeptide, known as lipid I. The sequence is that of Phospho-N-acetylmuramoyl-pentapeptide-transferase from Moorella thermoacetica (strain ATCC 39073 / JCM 9320).